We begin with the raw amino-acid sequence, 258 residues long: MRKIFLPLLLVALSPVAHSEGVQEVEIDAPLSGWHPAEGEDASFSQSINYPASSVNMADDQNISAQIRGKIKNYAAAGKVQQGRLVVNGASMPQRIESDGSFARPYIFTEGSNSVQVISPDGQSRQKMQFYSTPGTGTIRARLRLVLSWDTDNTDLDLHVVTPDGEHAWYGNTVLKNSGALDMDVTTGYGPEIFAMPAPIHGRYQVYINYYGGRSETELTTAQLTLITDEGSVNEKQETFIVPMRNAGELTLVKSFDW.

Residues methionine 1–serine 19 form the signal peptide.

This is an uncharacterized protein from Escherichia coli (strain K12).